The sequence spans 370 residues: Aminomethyltransferase (370 aa).

Belongs to the GcvT family. The glycine cleavage system is composed of four proteins: P, T, L and H.

The catalysed reaction is N(6)-[(R)-S(8)-aminomethyldihydrolipoyl]-L-lysyl-[protein] + (6S)-5,6,7,8-tetrahydrofolate = N(6)-[(R)-dihydrolipoyl]-L-lysyl-[protein] + (6R)-5,10-methylene-5,6,7,8-tetrahydrofolate + NH4(+). Functionally, the glycine cleavage system catalyzes the degradation of glycine. The chain is Aminomethyltransferase from Stenotrophomonas maltophilia (strain R551-3).